The primary structure comprises 301 residues: Securin (301 aa).

Disordered regions lie at residues M1–L55, D82–L120, and A218–H284. The D-box 1 signature appears at R33–L36. Positions S38–V50 are enriched in polar residues. A D-box 2 motif is present at residues R52–L55. Composition is skewed to polar residues over residues E88–A98, P110–P119, and V231–Y245. 2 consecutive repeats follow at residues A250–S260 and A270–S280.

This sequence belongs to the securin family. As to quaternary structure, interacts with the caspase-like cut1, and prevents its protease activity probably by covering its active site. In terms of processing, ubiquitinated by the anaphase promoting complex (APC) at the onset of anaphase, conducting to its degradation.

It is found in the cytoplasm. It localises to the nucleus. Regulatory protein, which plays a central role in chromosome stability. Probably acts by blocking the action of key proteins. During the mitosis, it blocks separase/cut1 function, preventing the proteolysis of the cohesin complex and the subsequent segregation of the chromosomes. At the onset of anaphase, it is ubiquitinated, conducting to its destruction and to the liberation of cut1. This Schizosaccharomyces pombe (strain 972 / ATCC 24843) (Fission yeast) protein is Securin (cut2).